A 358-amino-acid chain; its full sequence is DnaJ homolog subfamily B member 11 (358 aa).

Residues 1-22 form the signal peptide; sequence MAPQNLSTFCLLLLYLIGAVIA. In terms of domain architecture, J spans 25 to 90; the sequence is DFYKILGVPR…EKRKQYDTYG (66 aa). Threonine 188 is modified (phosphothreonine). Asparagine 261 carries N-linked (GlcNAc...) asparagine glycosylation.

Part of a large chaperone multiprotein complex comprising DNAJB11, HSP90B1, HSPA5, HYOU, PDIA2, PDIA4, PDIA6, PPIB, SDF2L1, UGGT1 and very small amounts of ERP29, but not, or at very low levels, CALR nor CANX. Binds to denatured substrates in an ATP-independent manner. Interacts via the J domain with HSPA5 in an ATP-dependent manner. Post-translationally, contains high-mannose Endo H-sensitive carbohydrates. In terms of processing, cys-169, Cys-171, Cys-193 and Cys-196 form intramolecular disulfide bonds. The preferential partner for each Cys is not known. Thr-188 was reported to be phosphorylated upon DNA damage by ATM or ATR; however as this position has been shown to be in the ER lumen, the in vivo relevance is not proven. In terms of tissue distribution, widely expressed.

The protein resides in the endoplasmic reticulum lumen. Its function is as follows. As a co-chaperone for HSPA5 it is required for proper folding, trafficking or degradation of proteins. Binds directly to both unfolded proteins that are substrates for ERAD and nascent unfolded peptide chains, but dissociates from the HSPA5-unfolded protein complex before folding is completed. May help recruiting HSPA5 and other chaperones to the substrate. Stimulates HSPA5 ATPase activity. It is necessary for maturation and correct trafficking of PKD1. This Homo sapiens (Human) protein is DnaJ homolog subfamily B member 11 (DNAJB11).